Reading from the N-terminus, the 363-residue chain is tRNA N6-adenosine threonylcarbamoyltransferase (363 aa).

The Fe cation site is built by H121 and H125. Residues 143–147 (LASGG), D176, G189, and N287 contribute to the substrate site. Fe cation is bound at residue D315.

The protein belongs to the KAE1 / TsaD family. Requires Fe(2+) as cofactor.

The protein resides in the cytoplasm. The enzyme catalyses L-threonylcarbamoyladenylate + adenosine(37) in tRNA = N(6)-L-threonylcarbamoyladenosine(37) in tRNA + AMP + H(+). Its function is as follows. Required for the formation of a threonylcarbamoyl group on adenosine at position 37 (t(6)A37) in tRNAs that read codons beginning with adenine. Is involved in the transfer of the threonylcarbamoyl moiety of threonylcarbamoyl-AMP (TC-AMP) to the N6 group of A37, together with TsaE and TsaB. TsaD likely plays a direct catalytic role in this reaction. This chain is tRNA N6-adenosine threonylcarbamoyltransferase, found in Rhodopseudomonas palustris (strain TIE-1).